The sequence spans 352 residues: Ketoisovalerate oxidoreductase subunit VorB (352 aa).

As to quaternary structure, heterotrimer of the VorA, VorB and VorC subunits.

It catalyses the reaction 3-methyl-2-oxobutanoate + 2 oxidized [2Fe-2S]-[ferredoxin] + CoA = 2-methylpropanoyl-CoA + 2 reduced [2Fe-2S]-[ferredoxin] + CO2 + H(+). This Methanothermobacter marburgensis (strain ATCC BAA-927 / DSM 2133 / JCM 14651 / NBRC 100331 / OCM 82 / Marburg) (Methanobacterium thermoautotrophicum) protein is Ketoisovalerate oxidoreductase subunit VorB (vorB).